The following is a 225-amino-acid chain: 7-cyano-7-deazaguanine synthase (225 aa).

10–20 (LSGGIDSATAA) is a binding site for ATP. The Zn(2+) site is built by Cys-191, Cys-199, Cys-202, and Cys-205.

This sequence belongs to the QueC family. Requires Zn(2+) as cofactor.

It catalyses the reaction 7-carboxy-7-deazaguanine + NH4(+) + ATP = 7-cyano-7-deazaguanine + ADP + phosphate + H2O + H(+). It functions in the pathway purine metabolism; 7-cyano-7-deazaguanine biosynthesis. Catalyzes the ATP-dependent conversion of 7-carboxy-7-deazaguanine (CDG) to 7-cyano-7-deazaguanine (preQ(0)). The polypeptide is 7-cyano-7-deazaguanine synthase (Prochlorococcus marinus (strain NATL1A)).